A 572-amino-acid chain; its full sequence is Hemagglutinin-neuraminidase (572 aa).

Over 1–31 (MEYWKHTNHGKDAGNELETSMATHGNKITNK) the chain is Intravirion. A helical membrane pass occupies residues 32–52 (ITYILWTIILVLLSIVFIIVL). The Virion surface portion of the chain corresponds to 53–572 (INSIKSEKAH…FKTEIPKSCS (520 aa)). 2 cysteine pairs are disulfide-bonded: Cys-190–Cys-214 and Cys-256–Cys-269. Residues 252–257 (NRKSCS) are involved in neuraminidase activity. Asn-308 and Asn-351 each carry an N-linked (GlcNAc...) asparagine; by host glycan. Cystine bridges form between Cys-355–Cys-469 and Cys-463–Cys-473. N-linked (GlcNAc...) asparagine; by host glycosylation is present at Asn-523. Cys-535 and Cys-544 form a disulfide bridge.

It belongs to the paramyxoviruses hemagglutinin-neuraminidase family. As to quaternary structure, homotetramer; composed of disulfide-linked homodimers. Interacts with F protein trimer.

It localises to the virion membrane. It is found in the host cell membrane. It carries out the reaction Hydrolysis of alpha-(2-&gt;3)-, alpha-(2-&gt;6)-, alpha-(2-&gt;8)- glycosidic linkages of terminal sialic acid residues in oligosaccharides, glycoproteins, glycolipids, colominic acid and synthetic substrates.. Functionally, attaches the virus to sialic acid-containing cell receptors and thereby initiating infection. Binding of HN protein to the receptor induces a conformational change that allows the F protein to trigger virion/cell membranes fusion. Its function is as follows. Neuraminidase activity ensures the efficient spread of the virus by dissociating the mature virions from the neuraminic acid containing glycoproteins. This chain is Hemagglutinin-neuraminidase (HN), found in Human parainfluenza 3 virus (strain Wash/47885/57) (HPIV-3).